Here is a 416-residue protein sequence, read N- to C-terminus: Hemagglutinin-esterase (416 aa).

The first 14 residues, 1 to 14 (MLSLILFFPSFAFA), serve as a signal peptide directing secretion. The esterase domain first part stretch occupies residues 4-121 (LILFFPSFAF…GVDSYMELKT (118 aa)). At 15 to 393 (VTPVTPYFGP…ESVDVISSSY (379 aa)) the chain is on the virion surface side. Catalysis depends on Ser37, which acts as the Nucleophile. Cys41 and Cys57 are oxidised to a cystine. 2 N-linked (GlcNAc...) asparagine; by host glycosylation sites follow: Asn59 and Asn76. Intrachain disulfides connect Cys88–Cys136, Cys108–Cys156, Cys192–Cys273, Cys200–Cys246, and Cys206–Cys213. A receptor binding region spans residues 122 to 263 (SFNIKLNQMA…GTHNASIVGN (142 aa)). Asn257, Asn278, and Asn294 each carry an N-linked (GlcNAc...) asparagine; by host glycan. Positions 264 to 379 (FLFYPTKSYC…SCPQYVKLFD (116 aa)) are esterase domain second part. An intrachain disulfide couples Cys304 to Cys309. Asn322 carries N-linked (GlcNAc...) asparagine; by host glycosylation. Residue His328 is the Charge relay system of the active site. N-linked (GlcNAc...) asparagine; by host glycosylation is present at Asn343. Residues Cys346 and Cys371 are joined by a disulfide bond. A helical transmembrane segment spans residues 394–414 (FVATWVLLVVVVILIFVIISF). Residues 415–416 (FC) lie on the Intravirion side of the membrane.

This sequence belongs to the influenza type C/coronaviruses hemagglutinin-esterase family. In terms of assembly, homodimer. Post-translationally, N-glycosylated.

The protein localises to the virion membrane. The protein resides in the host cell membrane. It carries out the reaction N-acetyl-9-O-acetylneuraminate + H2O = N-acetylneuraminate + acetate + H(+). The enzyme catalyses N-acetyl-4-O-acetylneuraminate + H2O = N-acetylneuraminate + acetate + H(+). Its function is as follows. Structural protein that makes short spikes at the surface of the virus. Contains receptor binding and receptor-destroying activities. Mediates de-O-acetylation of N-acetyl-9-O-acetylneuraminic acid, which is probably the receptor determinant recognized by the virus on the surface of erythrocytes and susceptible cells. This receptor-destroying activity is important for virus release as it probably helps preventing self-aggregation and ensures the efficient spread of the progeny virus from cell to cell. May serve as a secondary viral attachment protein for initiating infection, the spike protein being the major one. Seems to be a 'luxury' protein that is not absolutely necessary for virus infection in culture. However, its presence in the virus may alter its pathogenicity. May become a target for both the humoral and the cellular branches of the immune system. The protein is Hemagglutinin-esterase (HE) of Homo sapiens (Human).